Reading from the N-terminus, the 488-residue chain is MADVRKLKNYINGEWVESRADKYEDVINPATGEVLCQVPISTRAELDQAAVIAEQAFEKWSQVAVPRRARVLFSFQQLLIQHKEELARLITLENGKNLSEARGEVQRGIENVEFAAGAPTLMMGDSLASIATDVEAANYRYPVGVVGGIAPFNFPMMVPCWMFPMAIALGNSFILKPSERTPLLMEKLVELFSEAGLPKGVFNVVYGAHDVVNGILENEIIKAVSFVGSKPVGEYVYKTGSANLKRVQALTGAKNHTIVLNDADLEDTVTNVISAAFGSAGERCMACAVVTVEEGIADEFLAALRTAAQNVKIGNGLDDGVFLGPVIREENQKRTIAYIEKGLEEGAKLTVDGRETGLSEGHFVGPTILEDVTTDMTIWKDEIFAPVLSVIRVKNLQEAVRVANQSEFANGACIFTNNAKAIRYFREKIDAGMLGVNLGVPAPMAFFPFSGWKSSFYGTLHANGKDSVDFYTHKKVVTARYSLKGYEE.

Positions 150, 152, 176, 179, 180, 229, and 251 each coordinate NAD(+). C284 functions as the Nucleophile in the catalytic mechanism. Position 382 (E382) interacts with NAD(+).

The protein belongs to the aldehyde dehydrogenase family. IolA subfamily. As to quaternary structure, homotetramer.

It catalyses the reaction 3-oxopropanoate + NAD(+) + CoA + H2O = hydrogencarbonate + acetyl-CoA + NADH + H(+). The enzyme catalyses 2-methyl-3-oxopropanoate + NAD(+) + CoA + H2O = propanoyl-CoA + hydrogencarbonate + NADH + H(+). Its pathway is polyol metabolism; myo-inositol degradation into acetyl-CoA; acetyl-CoA from myo-inositol: step 7/7. Functionally, catalyzes the oxidation of malonate semialdehyde (MSA) and methylmalonate semialdehyde (MMSA) into acetyl-CoA and propanoyl-CoA, respectively. Is involved in a myo-inositol catabolic pathway. Bicarbonate, and not CO2, is the end-product of the enzymatic reaction. This Listeria monocytogenes serotype 4b (strain CLIP80459) protein is Malonate-semialdehyde dehydrogenase.